The chain runs to 263 residues: Endonuclease 8 (263 aa).

The active-site Schiff-base intermediate with DNA is the Pro-2. Glu-3 functions as the Proton donor in the catalytic mechanism. The Proton donor; for beta-elimination activity role is filled by Lys-53. DNA-binding residues include Gln-70, Arg-125, and Asn-169. The FPG-type zinc finger occupies 229–263 (KVFHRDGELCERCGGIIEKTTLSSRPFYWCPGCQH). Arg-253 serves as the catalytic Proton donor; for delta-elimination activity.

The protein belongs to the FPG family. Zn(2+) serves as cofactor.

It catalyses the reaction 2'-deoxyribonucleotide-(2'-deoxyribose 5'-phosphate)-2'-deoxyribonucleotide-DNA = a 3'-end 2'-deoxyribonucleotide-(2,3-dehydro-2,3-deoxyribose 5'-phosphate)-DNA + a 5'-end 5'-phospho-2'-deoxyribonucleoside-DNA + H(+). Functionally, involved in base excision repair of DNA damaged by oxidation or by mutagenic agents. Acts as a DNA glycosylase that recognizes and removes damaged bases. Has a preference for oxidized pyrimidines, such as thymine glycol, 5,6-dihydrouracil and 5,6-dihydrothymine. Has AP (apurinic/apyrimidinic) lyase activity and introduces nicks in the DNA strand. Cleaves the DNA backbone by beta-delta elimination to generate a single-strand break at the site of the removed base with both 3'- and 5'-phosphates. The chain is Endonuclease 8 from Escherichia coli (strain 55989 / EAEC).